We begin with the raw amino-acid sequence, 539 residues long: Efflux pump roqT (539 aa).

Residues 1–25 (MEKEVATDPLPQEIPSDAPDEGGSL) form a disordered region. 12 helical membrane-spanning segments follow: residues 36–56 (VSLT…VTII), 108–128 (LFLF…VGLI), 133–153 (IAGL…AQTV), 160–180 (VFTA…PPLG), 191–211 (WCFY…LFFF), 233–253 (IGSF…QWGG), 262–282 (RIIV…AVQI), 305–325 (WFAI…PIWF), 338–360 (VMNL…LVTI), 362–384 (GYYN…LLST), 395–415 (IGYQ…PFMV), and 502–522 (AFYV…ALEW).

It belongs to the major facilitator superfamily. TCR/Tet family.

It localises to the membrane. Its function is as follows. Efflux pump; part of the gene cluster that mediates the biosynthesis of the mycotoxins roquefortine C and meleagrin. The polypeptide is Efflux pump roqT (Penicillium rubens (strain ATCC 28089 / DSM 1075 / NRRL 1951 / Wisconsin 54-1255) (Penicillium chrysogenum)).